Reading from the N-terminus, the 1955-residue chain is Protocadherin-15 (1955 aa).

The signal sequence occupies residues 1–26 (MFRQFYLWTCLASGIILGSLFEICLG). The Extracellular portion of the chain corresponds to 27-1376 (QYDDDCKLAR…GESLGYTEGA (1350 aa)). A disulfide bond links Cys-32 and Cys-120. Cadherin domains follow at residues 40 to 147 (PATI…SPTF), 148 to 265 (KHES…GPMF), 278 to 395 (RPLT…SPYF), 396 to 509 (TMPS…TPTF), 510 to 616 (PEIS…PPRF), 617 to 717 (PQLM…APVF), 719 to 819 (PYLP…SPVF), 820 to 926 (TNST…PPVF), 927 to 1035 (SKRI…IPRF), 1037 to 1144 (QEEY…PPVF), and 1145 to 1259 (QKKF…PPTL). N-linked (GlcNAc...) asparagine glycans are attached at residues Asn-52, Asn-97, and Asn-201. Residues Asn-419, Asn-559, Asn-662, Asn-724, Asn-768, Asn-821, and Asn-851 are each glycosylated (N-linked (GlcNAc...) asparagine). Residues Asn-1064, Asn-1084, and Asn-1175 are each glycosylated (N-linked (GlcNAc...) asparagine). The chain crosses the membrane as a helical span at residues 1377–1397 (LLALAFIIILCCIPAILVVLV). The Cytoplasmic segment spans residues 1398 to 1955 (SYRQFKVRQA…KQSHSQSTSL (558 aa)). Residues 1426 to 1444 (VPAPAPVAAPPPPPPPPPG) are compositionally biased toward pro residues. 4 disordered regions span residues 1426 to 1446 (VPAP…PGAH), 1601 to 1623 (QGTR…GSSN), 1745 to 1766 (CPLP…APLA), and 1928 to 1955 (ITSE…STSL). A compositionally biased stretch (polar residues) spans 1928-1941 (ITSEQNKGSLNNIV).

Antiparallel heterodimer with CDH23. Found in a complex with TMIE and LHFPL5. Interacts with LHFPL5/TMHS; this interaction is required for efficient localization to hair bundles. Interacts with MYO7A. Interacts with USH1G; this interaction may recruit USH1G to the plasma membrane. Interacts with TOMT. Isoforms CD1 and CD3 interact with TMC1 (via N-terminus) and TMC2 (via N-terminus). In terms of tissue distribution, expressed in brain, lung, kidney, spleen and testis. Found also in the inner and outer synaptic layers, and the nerve fiber layer in adult and fetal retinas. Found in the supporting cells, outer sulcus cells and spiral ganglion of fetal cochlea. Expressed in cytotoxic tumor-derived T- and NK-cell lines as well as biopsies of nasal NK/T-cell lymphomas. Not detected in normal or in vitro activated peripheral blood cells, CD4 or CD8 lymphocytes or NK cells. Isoform 3 is expressed in brain, heart, cerebellum and kidney. CD1 isoforms, such as isoform 1, have a limited pattern of expression and is detected in testis, retina and cochlea. CD2 isoforms, such as isoforms 4 and 5, are expressed in heart, kidney, thymus, spleen, testis, retina and cochlea. CD3 isoforms, such as isoform 6, are widely expressed.

Its subcellular location is the cell membrane. The protein resides in the secreted. Its function is as follows. Calcium-dependent cell-adhesion protein. Essential for maintenance of normal retinal and cochlear function. This Homo sapiens (Human) protein is Protocadherin-15 (PCDH15).